A 196-amino-acid chain; its full sequence is MTKLIVGLGNPGEEHEEDRHNAGFWFVDALAKQLGVRFESEKRFHGKVAKAKWEGEDLFLLKPSTYMNLSGQSVGALCRFHKIMPADILVVQDELDIKPGSARLKLGGGTGGHNGLKDIQAHLSTPNYWRLRLGIGHPRDIAGDGRPMDVADYVLRRPQLTEQKLINTSIENGLNILSLFLKGDTQTAMMELHSKG.

Histidine 15 lines the tRNA pocket. Histidine 20 functions as the Proton acceptor in the catalytic mechanism. Positions 66, 68, and 114 each coordinate tRNA.

This sequence belongs to the PTH family. Monomer.

Its subcellular location is the cytoplasm. It catalyses the reaction an N-acyl-L-alpha-aminoacyl-tRNA + H2O = an N-acyl-L-amino acid + a tRNA + H(+). Hydrolyzes ribosome-free peptidyl-tRNAs (with 1 or more amino acids incorporated), which drop off the ribosome during protein synthesis, or as a result of ribosome stalling. In terms of biological role, catalyzes the release of premature peptidyl moieties from peptidyl-tRNA molecules trapped in stalled 50S ribosomal subunits, and thus maintains levels of free tRNAs and 50S ribosomes. This Polynucleobacter necessarius subsp. necessarius (strain STIR1) protein is Peptidyl-tRNA hydrolase.